The sequence spans 438 residues: V-type ATP synthase beta chain (438 aa).

Belongs to the ATPase alpha/beta chains family.

Functionally, produces ATP from ADP in the presence of a proton gradient across the membrane. The V-type beta chain is a regulatory subunit. The polypeptide is V-type ATP synthase beta chain (Chlamydia felis (strain Fe/C-56) (Chlamydophila felis)).